Reading from the N-terminus, the 169-residue chain is Cell division inhibitor SulA (169 aa).

The span at 1–16 (MFTSAHANRSPLTSAS) shows a compositional bias: polar residues. Residues 1-20 (MFTSAHANRSPLTSASVRRP) are disordered. Residues 106-112 (ALRTGNY) form a ftsZ binding region. The interval 162 to 169 (KIHSNLYH) is lon protease binding.

It belongs to the SulA family. Interacts with FtsZ. In terms of processing, is rapidly cleaved and degraded by the Lon protease once DNA damage is repaired.

Component of the SOS system and an inhibitor of cell division. Accumulation of SulA causes rapid cessation of cell division and the appearance of long, non-septate filaments. In the presence of GTP, binds a polymerization-competent form of FtsZ in a 1:1 ratio, thus inhibiting FtsZ polymerization and therefore preventing it from participating in the assembly of the Z ring. This mechanism prevents the premature segregation of damaged DNA to daughter cells during cell division. This chain is Cell division inhibitor SulA, found in Klebsiella aerogenes (Enterobacter aerogenes).